The primary structure comprises 383 residues: 8-amino-7-oxononanoate synthase (383 aa).

Residue Arg21 participates in substrate binding. Residue 108–109 participates in pyridoxal 5'-phosphate binding; that stretch reads GY. A substrate-binding site is contributed by His133. The pyridoxal 5'-phosphate site is built by Ser179, His207, and Thr233. At Lys236 the chain carries N6-(pyridoxal phosphate)lysine. Position 350 (Thr350) interacts with substrate.

It belongs to the class-II pyridoxal-phosphate-dependent aminotransferase family. BioF subfamily. In terms of assembly, homodimer. Pyridoxal 5'-phosphate serves as cofactor.

It catalyses the reaction 6-carboxyhexanoyl-[ACP] + L-alanine + H(+) = (8S)-8-amino-7-oxononanoate + holo-[ACP] + CO2. Its pathway is cofactor biosynthesis; biotin biosynthesis. Its function is as follows. Catalyzes the decarboxylative condensation of pimeloyl-[acyl-carrier protein] and L-alanine to produce 8-amino-7-oxononanoate (AON), [acyl-carrier protein], and carbon dioxide. The polypeptide is 8-amino-7-oxononanoate synthase (Photorhabdus laumondii subsp. laumondii (strain DSM 15139 / CIP 105565 / TT01) (Photorhabdus luminescens subsp. laumondii)).